Here is a 483-residue protein sequence, read N- to C-terminus: Docking protein 1 (483 aa).

Methionine 1 carries the post-translational modification N-acetylmethionine. In terms of domain architecture, PH spans 4–119 (AVMEGPLFLQ…WVQTLCQNAF (116 aa)). Phosphoserine is present on serine 48. The IRS-type PTB domain maps to 151-259 (EGSQFWVTVQ…HRQKIQGKAG (109 aa)). Serine 269 and serine 291 each carry phosphoserine. Residues 293-326 (PALYSEPLDSLRIPPGPSQDSLYSDPLDSTPARA) form a disordered region. Phosphotyrosine occurs at positions 296, 337, 362, 377, 398, and 409. Residues 409–483 (YAVPPPRSTK…RTGAKSEGST (75 aa)) form a disordered region. The segment covering 411-424 (VPPPRSTKPFPAPK) has biased composition (pro residues). Position 416 is a phosphoserine (serine 416). Over residues 434-460 (GAATGSGSQGHSSDTALYSQVQKSGAS) the composition is skewed to polar residues. Phosphotyrosine is present on tyrosine 451. The residue at position 462 (serine 462) is a Phosphoserine.

This sequence belongs to the DOK family. Type A subfamily. As to quaternary structure, interacts with RasGAP, INPP5D/SHIP1 and ABL1. Interacts directly with phosphorylated ITGB3. Interacts with SRMS (via the SH2 and SH3 domains). In terms of processing, constitutively tyrosine-phosphorylated. Phosphorylated by TEC. Phosphorylated by LYN. Phosphorylated on tyrosine residues by the insulin receptor kinase. Results in the negative regulation of the insulin signaling pathway. Phosphorylated on tyrosine residues by SRMS.

The protein resides in the cytoplasm. Its subcellular location is the nucleus. DOK proteins are enzymatically inert adaptor or scaffolding proteins. They provide a docking platform for the assembly of multimolecular signaling complexes. DOK1 appears to be a negative regulator of the insulin signaling pathway. Modulates integrin activation by competing with talin for the same binding site on ITGB3. The sequence is that of Docking protein 1 (DOK1) from Bos taurus (Bovine).